We begin with the raw amino-acid sequence, 1113 residues long: Carbamoyl phosphate synthase large chain (1113 aa).

Residues 1 to 407 (MPKRSDINHV…ALNKALRSLE (407 aa)) are carboxyphosphate synthetic domain. Positions 134, 174, 180, 181, 213, 215, 220, 246, 247, 248, 290, and 304 each coordinate ATP. Residues 138–333 (KDIVTTIGGE…IAKMAAKLAI (196 aa)) enclose the ATP-grasp 1 domain. Positions 290, 304, and 306 each coordinate Mg(2+). The Mn(2+) site is built by Gln290, Glu304, and Asn306. An oligomerization domain region spans residues 408–565 (TKQQGFWTKP…ELDPAAESEV (158 aa)). The segment at 566-967 (APQTEREKVL…AYAKAEAGAF (402 aa)) is carbamoyl phosphate synthetic domain. The region spanning 695–886 (GALLNREQLP…LAKAASRIAV (192 aa)) is the ATP-grasp 2 domain. Residues Arg731, Arg770, Leu772, Glu777, Gly802, Ile803, His804, Ser805, Gln845, and Glu857 each coordinate ATP. Mg(2+)-binding residues include Gln845, Glu857, and Asn859. The Mn(2+) site is built by Gln845, Glu857, and Asn859. In terms of domain architecture, MGS-like spans 968 to 1113 (GALPTEGTVF…LQELDHAVKA (146 aa)). The tract at residues 968–1113 (GALPTEGTVF…LQELDHAVKA (146 aa)) is allosteric domain.

It belongs to the CarB family. Composed of two chains; the small (or glutamine) chain promotes the hydrolysis of glutamine to ammonia, which is used by the large (or ammonia) chain to synthesize carbamoyl phosphate. Tetramer of heterodimers (alpha,beta)4. It depends on Mg(2+) as a cofactor. Mn(2+) serves as cofactor.

The catalysed reaction is hydrogencarbonate + L-glutamine + 2 ATP + H2O = carbamoyl phosphate + L-glutamate + 2 ADP + phosphate + 2 H(+). It carries out the reaction hydrogencarbonate + NH4(+) + 2 ATP = carbamoyl phosphate + 2 ADP + phosphate + 2 H(+). The protein operates within amino-acid biosynthesis; L-arginine biosynthesis; carbamoyl phosphate from bicarbonate: step 1/1. Its pathway is pyrimidine metabolism; UMP biosynthesis via de novo pathway; (S)-dihydroorotate from bicarbonate: step 1/3. Functionally, large subunit of the glutamine-dependent carbamoyl phosphate synthetase (CPSase). CPSase catalyzes the formation of carbamoyl phosphate from the ammonia moiety of glutamine, carbonate, and phosphate donated by ATP, constituting the first step of 2 biosynthetic pathways, one leading to arginine and/or urea and the other to pyrimidine nucleotides. The large subunit (synthetase) binds the substrates ammonia (free or transferred from glutamine from the small subunit), hydrogencarbonate and ATP and carries out an ATP-coupled ligase reaction, activating hydrogencarbonate by forming carboxy phosphate which reacts with ammonia to form carbamoyl phosphate. This is Carbamoyl phosphate synthase large chain from Corynebacterium glutamicum (strain ATCC 13032 / DSM 20300 / JCM 1318 / BCRC 11384 / CCUG 27702 / LMG 3730 / NBRC 12168 / NCIMB 10025 / NRRL B-2784 / 534).